A 2511-amino-acid polypeptide reads, in one-letter code: Chromodomain-helicase-DNA-binding protein 8 (2511 aa).

Residues 484–615 (PRVLNQDELP…RSNRQVKRKK (132 aa)) are disordered. Positions 515–524 (GGGVGGGGGG) are enriched in gly residues. Over residues 604–615 (KRRSNRQVKRKK) the composition is skewed to basic residues. 2 consecutive Chromo domains span residues 680-745 (AIVD…AQMR) and 760-826 (VEVD…RTPR). Positions 859–1033 (LFNWYNRQNC…FSLLHFLEPA (175 aa)) constitute a Helicase ATP-binding domain. An ATP-binding site is contributed by 872–879 (DEMGLGKT). The DEAH box signature appears at 984–987 (DEAH). The Helicase C-terminal domain occupies 1174-1330 (LLDKLLPRLK…SMSGNKESSI (157 aa)). 4 disordered regions span residues 1440-1482 (TRQF…HSGG), 1715-1736 (EQQA…SEDP), 2086-2168 (SKNN…LTDP), and 2468-2511 (PSAL…SSED). The span at 1452 to 1461 (DLSDLDSDDD) shows a compositional bias: acidic residues. Residues 2111–2125 (DSGSSSSSRHSGSSD) show a composition bias toward low complexity.

It belongs to the SNF2/RAD54 helicase family. CHD8 subfamily. Component of some MLL1/MLL complex.

It localises to the nucleus. It carries out the reaction ATP + H2O = ADP + phosphate + H(+). ATP-dependent chromatin-remodeling factor, it slides nucleosomes along DNA; nucleosome sliding requires ATP. Acts as a transcription repressor by remodeling chromatin structure and recruiting histone H1 to target genes. Suppresses p53/tp53-mediated apoptosis by recruiting histone H1 and preventing p53/tp53 transactivation activity. Acts as a negative regulator of Wnt signaling pathway by regulating beta-catenin (ctnnb1) activity. Negatively regulates ctnnb1-targeted gene expression by being recruited specifically to the promoter regions of several ctnnb1 responsive genes. May also act as a transcription activator by participating in efficient U6 RNA polymerase III transcription. This is Chromodomain-helicase-DNA-binding protein 8 from Danio rerio (Zebrafish).